Reading from the N-terminus, the 355-residue chain is MSVAGRAESLGPPDSFAKRVLVTGGAGFIASHMIVSLVEDYPNYMIINLDKLDYCASLKNLETISNKQNYKFIQGDICDSHFVKLLFETEKIDIVLHFAAQTHVDLSFVRAFEFTYVNVYGTHVLVSAAHEARVEKFIYVSTDEVYGGSLDKEFDESSPKQPTNPYASSKAAAECFVQSYWEQYKFPVVITRSSNVYGPHQYPEKVIPKFISLLQHNRKCCIHGTGLQTRNFLYATDVVEAFLTVLKKGKPGEIYNIGTNFEMSVLQLAKELIQLIKETNSESEMENWVDYVDDRPTNDMRYPMKSEKIHGLGWRPKVPWKEGIKKTIEWYRENFHNWKNAEKALEPFPVQPPFV.

Residue Thr142 participates in substrate binding. Asp143 (proton donor) is an active-site residue. Residues Glu144 and Tyr166 each act as proton acceptor in the active site.

Belongs to the NAD(P)-dependent epimerase/dehydratase family. dTDP-glucose dehydratase subfamily. NAD(+) is required as a cofactor.

It carries out the reaction dTDP-alpha-D-glucose = dTDP-4-dehydro-6-deoxy-alpha-D-glucose + H2O. The chain is dTDP-D-glucose 4,6-dehydratase (TGDS) from Bos taurus (Bovine).